The following is a 131-amino-acid chain: Probable ATP synthase subunit g 2, mitochondrial (131 aa).

The protein belongs to the ATPase g subunit family. In terms of assembly, subunit of the F-type ATPase which has 2 components, CF(1) - the catalytic core - and CF(0) - the membrane proton channel.

Its subcellular location is the mitochondrion membrane. Its function is as follows. Mitochondrial membrane ATP synthase (F(1)F(0) ATP synthase or Complex V) produces ATP from ADP in the presence of a proton gradient across the membrane which is generated by electron transport complexes of the respiratory chain. F-type ATPases consist of two structural domains, F(1) - containing the extramembraneous catalytic core, and F(0) - containing the membrane proton channel, linked together by a central stalk and a peripheral stalk. During catalysis, ATP synthesis in the catalytic domain of F(1) is coupled via a rotary mechanism of the central stalk subunits to proton translocation. Part of the complex F(0) domain. Minor subunit located with subunit a in the membrane. This chain is Probable ATP synthase subunit g 2, mitochondrial, found in Caenorhabditis elegans.